Consider the following 92-residue polypeptide: Large ribosomal subunit protein eL43 (92 aa).

The segment at 39 to 60 (CDFCGKYGMKRQAVGIWCCKGC) adopts a C4-type zinc-finger fold.

Belongs to the eukaryotic ribosomal protein eL43 family.

In Ostreococcus tauri, this protein is Large ribosomal subunit protein eL43 (RPL37a).